Consider the following 141-residue polypeptide: Hemoglobin subunit alpha-D (141 aa).

In terms of domain architecture, Globin spans 1–141 (MLTAEDKKLI…VAAVLAGKYR (141 aa)). Heme b is bound by residues His-58 and His-87.

This sequence belongs to the globin family. Heterotetramer of two alpha-D chains and two beta chains. Red blood cells.

Its function is as follows. Involved in oxygen transport from the lung to the various peripheral tissues. This is Hemoglobin subunit alpha-D (HBAD) from Coturnix japonica (Japanese quail).